Consider the following 578-residue polypeptide: Moesin/ezrin/radixin homolog 1 (578 aa).

The region spanning 1-296 is the FERM domain; sequence MSPKALNVRV…GNHELYMRRR (296 aa). The interval 463 to 555 is disordered; sequence ASTTPQHHHV…HRENVRQGRD (93 aa). Residues 475 to 484 are compositionally biased toward acidic residues; that stretch reads DENENEEELT. The segment covering 492 to 555 has biased composition (basic and acidic residues); it reads VSRDLDTDEH…HRENVRQGRD (64 aa). The residue at position 559 (Thr-559) is a Phosphothreonine.

As to quaternary structure, interacts with wgn. Interacts with Mer and arm at the adherens junction. Interacts with cytoskeletal actin at apical buds of microvilli in the precellularised embryo. Interacts with PCID2 (possibly via FERM domain). Post-translationally, phosphorylated on Thr-559. In the oocyte this phosphorylation is induced by phosphatidylinositol 4,5-bisphosphate (PtdIns[4,5]P(2)) generated by sktl.

The protein localises to the cell junction. The protein resides in the adherens junction. Its subcellular location is the cell projection. It localises to the microvillus. It is found in the rhabdomere. The protein localises to the cell membrane. The protein resides in the cytoplasm. Its subcellular location is the cytoskeleton. It localises to the cell cortex. It is found in the cilium. The protein localises to the flagellum. The protein resides in the nucleus. Its subcellular location is the nucleoplasm. It localises to the chromosome. Involved in connections of major cytoskeletal structures to the plasma membrane. Together with wgn, involved in control of axon targeting of R8 and R2-R5 photoreceptors, independent of egr. In the nucleus, recruited to sites of active transcription by RNA polymerase II where it has a role in nuclear mRNA export together with the mRNA export factor PCID2 and other messenger ribonucleoprotein (mRNP) particles. The sequence is that of Moesin/ezrin/radixin homolog 1 (Moe) from Drosophila melanogaster (Fruit fly).